The sequence spans 56 residues: Photosystem II assembly protein Psb34 (56 aa).

Residues 1–33 lie on the Cytoplasmic side of the membrane; the sequence is MRYTTDEGGRLNNFAIEPKVYQAQPWTPQQKVR. A helical transmembrane segment spans residues 34 to 54; sequence AALLVGGGLLLVAGLVAIAVG. The Extracellular portion of the chain corresponds to 55–56; that stretch reads VS.

As to quaternary structure, part of photosystem II (PSII) assembly intermediate complex PSII-I; crystallized from a strain without psbJ, it forms monomeric PSII before addition of the oxygen evolving complex. PSII-I includes 3 assembly factors not found in mature PSII (Psb27, Psb28 and Psb34). The N-terminus of Psb34 (this protein) binds to CP47 (psbB) in close proximity to PsbH on the cytoplasmic face of PSII.

Its subcellular location is the cellular thylakoid membrane. Its function is as follows. Involved in photosystem II (PSII) assembly and/or repair, probably in conversion of late PSII assembly intermediates into mature dimeric PSII. This Thermosynechococcus vestitus (strain NIES-2133 / IAM M-273 / BP-1) protein is Photosystem II assembly protein Psb34.